We begin with the raw amino-acid sequence, 290 residues long: Acetyl-coenzyme A carboxylase carboxyl transferase subunit beta (290 aa).

One can recognise a CoA carboxyltransferase N-terminal domain in the interval 29 to 290 (LWGKCPECSQ…RLHGYREKRK (262 aa)). Residues C33, C36, C52, and C55 each contribute to the Zn(2+) site. A C4-type zinc finger spans residues 33–55 (CPECSQVVYRKDLLENANVCSNC).

Belongs to the AccD/PCCB family. In terms of assembly, acetyl-CoA carboxylase is a heterohexamer composed of biotin carboxyl carrier protein (AccB), biotin carboxylase (AccC) and two subunits each of ACCase subunit alpha (AccA) and ACCase subunit beta (AccD). It depends on Zn(2+) as a cofactor.

Its subcellular location is the cytoplasm. It carries out the reaction N(6)-carboxybiotinyl-L-lysyl-[protein] + acetyl-CoA = N(6)-biotinyl-L-lysyl-[protein] + malonyl-CoA. It participates in lipid metabolism; malonyl-CoA biosynthesis; malonyl-CoA from acetyl-CoA: step 1/1. In terms of biological role, component of the acetyl coenzyme A carboxylase (ACC) complex. Biotin carboxylase (BC) catalyzes the carboxylation of biotin on its carrier protein (BCCP) and then the CO(2) group is transferred by the transcarboxylase to acetyl-CoA to form malonyl-CoA. This is Acetyl-coenzyme A carboxylase carboxyl transferase subunit beta from Prochlorococcus marinus (strain MIT 9211).